The following is a 64-amino-acid chain: Large ribosomal subunit protein uL29 (64 aa).

The protein belongs to the universal ribosomal protein uL29 family.

In Polynucleobacter necessarius subsp. necessarius (strain STIR1), this protein is Large ribosomal subunit protein uL29.